Reading from the N-terminus, the 299-residue chain is Fructose-1,6-bisphosphatase class 1 (299 aa).

The Mg(2+) site is built by Glu-79, Asp-98, Leu-100, and Asp-101. Substrate contacts are provided by residues 101–104 (DGSS), Tyr-207, and Lys-238. Position 244 (Glu-244) interacts with Mg(2+).

This sequence belongs to the FBPase class 1 family. In terms of assembly, homotetramer. The cofactor is Mg(2+).

The protein localises to the cytoplasm. It catalyses the reaction beta-D-fructose 1,6-bisphosphate + H2O = beta-D-fructose 6-phosphate + phosphate. Its pathway is carbohydrate biosynthesis; gluconeogenesis. This Campylobacter curvus (strain 525.92) protein is Fructose-1,6-bisphosphatase class 1.